Here is a 234-residue protein sequence, read N- to C-terminus: Triggering receptor expressed on myeloid cells 1 (234 aa).

An N-terminal signal peptide occupies residues 1-20 (MRKTRLWGLLWMLFVSELRA). Residues 21–205 (ATKLTEEKYE…TDIIRVPVFN (185 aa)) are Extracellular-facing. The Ig-like V-type domain maps to 26 to 134 (EEKYELKEGQ…LFDRIRLVVT (109 aa)). C41 and C113 form a disulfide bridge. 3 N-linked (GlcNAc...) asparagine glycosylation sites follow: N146, N191, and N194. Residues 206–226 (IVILLAGGFLSKSLVFSVLFA) traverse the membrane as a helical segment. Residues 227–234 (VTLRSFVP) are Cytoplasmic-facing.

Monomer. Homomultimer; when activated. Interacts with TYROBP/DAP12. Interacts with TLR4. Post-translationally, glycosylated. As to expression, mostly expressed by immune cells of the myeloid lineage, such as monocytes, macrophages, neutrophils and dendritic cells. Expression is associated with a mature stage of myeloid development. Highly expressed in adult liver, lung and spleen than in corresponding fetal tissue. Also expressed in the lymph node, placenta, spinal cord and heart tissues. Isoform 2 was detected in the lung, liver and mature monocytes.

The protein localises to the cell membrane. The protein resides in the secreted. Its function is as follows. Cell surface receptor that plays important roles in innate and adaptive immunity by amplifying inflammatory responses. Upon activation by various ligands such as PGLYRP1, HMGB1 or HSP70, multimerizes and forms a complex with transmembrane adapter TYROBP/DAP12. In turn, initiates a SYK-mediated cascade of tyrosine phosphorylation, activating multiple downstream mediators such as BTK, MAPK1, MAPK3 or phospholipase C-gamma. This cascade promotes the neutrophil- and macrophage-mediated release of pro-inflammatory cytokines and/or chemokines, as well as their migration and thereby amplifies inflammatory responses that are triggered by bacterial and fungal infections. By also promoting the amplification of inflammatory signals that are initially triggered by Toll-like receptor (TLR) and NOD-like receptor engagement, plays a major role in the pathophysiology of acute and chronic inflammatory diseases of different etiologies including septic shock and atherosclerosis. Acts as a decoy receptor, counterbalancing TREM1 pro-inflammatory activity through the neutralization of its ligand. The polypeptide is Triggering receptor expressed on myeloid cells 1 (TREM1) (Homo sapiens (Human)).